The sequence spans 373 residues: 4-hydroxy-3-methylbut-2-en-1-yl diphosphate synthase (flavodoxin) (373 aa).

Residues cysteine 270, cysteine 273, cysteine 305, and glutamate 312 each contribute to the [4Fe-4S] cluster site.

It belongs to the IspG family. The cofactor is [4Fe-4S] cluster.

The enzyme catalyses (2E)-4-hydroxy-3-methylbut-2-enyl diphosphate + oxidized [flavodoxin] + H2O + 2 H(+) = 2-C-methyl-D-erythritol 2,4-cyclic diphosphate + reduced [flavodoxin]. It participates in isoprenoid biosynthesis; isopentenyl diphosphate biosynthesis via DXP pathway; isopentenyl diphosphate from 1-deoxy-D-xylulose 5-phosphate: step 5/6. Functionally, converts 2C-methyl-D-erythritol 2,4-cyclodiphosphate (ME-2,4cPP) into 1-hydroxy-2-methyl-2-(E)-butenyl 4-diphosphate. This is 4-hydroxy-3-methylbut-2-en-1-yl diphosphate synthase (flavodoxin) from Klebsiella pneumoniae (strain 342).